Reading from the N-terminus, the 870-residue chain is Alanine--tRNA ligase (870 aa).

Residues His585, His589, Cys689, and His693 each contribute to the Zn(2+) site.

This sequence belongs to the class-II aminoacyl-tRNA synthetase family. Zn(2+) serves as cofactor.

Its subcellular location is the cytoplasm. It carries out the reaction tRNA(Ala) + L-alanine + ATP = L-alanyl-tRNA(Ala) + AMP + diphosphate. In terms of biological role, catalyzes the attachment of alanine to tRNA(Ala) in a two-step reaction: alanine is first activated by ATP to form Ala-AMP and then transferred to the acceptor end of tRNA(Ala). Also edits incorrectly charged Ser-tRNA(Ala) and Gly-tRNA(Ala) via its editing domain. This is Alanine--tRNA ligase from Picrophilus torridus (strain ATCC 700027 / DSM 9790 / JCM 10055 / NBRC 100828 / KAW 2/3).